Consider the following 161-residue polypeptide: Fatty acid-binding protein homolog 2 (161 aa).

A signal peptide spans 1–19; the sequence is MSSKFLILLAFCGATLVAA.

It belongs to the calycin superfamily. Fatty-acid binding protein (FABP) family.

Its subcellular location is the secreted. In terms of biological role, may play a role in sequestering potentially toxic fatty acids and their peroxidation products, or it may be involved in the maintenance of the impermeable lipid layer of the eggshell. This Caenorhabditis elegans protein is Fatty acid-binding protein homolog 2 (lbp-2).